Here is a 329-residue protein sequence, read N- to C-terminus: Octaprenyl diphosphate synthase (329 aa).

Isopentenyl diphosphate contacts are provided by K51, R54, and H83. 2 residues coordinate Mg(2+): D90 and D94. R99 is an an all-trans-polyprenyl diphosphate binding site. R100 lines the isopentenyl diphosphate pocket. Positions 176, 177, and 214 each coordinate an all-trans-polyprenyl diphosphate.

Belongs to the FPP/GGPP synthase family. It depends on Mg(2+) as a cofactor.

The catalysed reaction is 5 isopentenyl diphosphate + (2E,6E)-farnesyl diphosphate = all-trans-octaprenyl diphosphate + 5 diphosphate. Supplies octaprenyl diphosphate, the precursor for the side chain of the isoprenoid quinones ubiquinone and menaquinone. The protein is Octaprenyl diphosphate synthase (ispB) of Haemophilus influenzae (strain ATCC 51907 / DSM 11121 / KW20 / Rd).